A 412-amino-acid chain; its full sequence is Serine hydroxymethyltransferase (412 aa).

Residues L117 and 121–123 (GHL) contribute to the (6S)-5,6,7,8-tetrahydrofolate site. Residue K226 is modified to N6-(pyridoxal phosphate)lysine.

The protein belongs to the SHMT family. Homodimer. Requires pyridoxal 5'-phosphate as cofactor.

The protein resides in the cytoplasm. It catalyses the reaction (6R)-5,10-methylene-5,6,7,8-tetrahydrofolate + glycine + H2O = (6S)-5,6,7,8-tetrahydrofolate + L-serine. It functions in the pathway one-carbon metabolism; tetrahydrofolate interconversion. The protein operates within amino-acid biosynthesis; glycine biosynthesis; glycine from L-serine: step 1/1. Its function is as follows. Catalyzes the reversible interconversion of serine and glycine with tetrahydrofolate (THF) serving as the one-carbon carrier. This reaction serves as the major source of one-carbon groups required for the biosynthesis of purines, thymidylate, methionine, and other important biomolecules. Also exhibits THF-independent aldolase activity toward beta-hydroxyamino acids, producing glycine and aldehydes, via a retro-aldol mechanism. This is Serine hydroxymethyltransferase from Natranaerobius thermophilus (strain ATCC BAA-1301 / DSM 18059 / JW/NM-WN-LF).